A 521-amino-acid polypeptide reads, in one-letter code: Nitric oxide reductase transcription regulator NorR2 (521 aa).

The residue at position 56 (Asp56) is a 4-aspartylphosphate. Residues 193-422 (IIGQSEAIAN…LEHVISRAAL (230 aa)) enclose the Sigma-54 factor interaction domain. ATP contacts are provided by residues 221-228 (GETGVGKE) and 293-302 (EVGELPLAIQ). Positions 497 to 516 (WAQAARQLGIDASNLHKLAR) form a DNA-binding region, H-T-H motif.

Its pathway is nitrogen metabolism; nitrate reduction (denitrification) [regulation]. Functionally, required for the nitric oxide (NO) induced expression of NO reductase. Not required for expression of 2 other pathway members, nitrate reductase (nirS) and nitrous oxide reductase (nosZ). In Cupriavidus necator (strain ATCC 17699 / DSM 428 / KCTC 22496 / NCIMB 10442 / H16 / Stanier 337) (Ralstonia eutropha), this protein is Nitric oxide reductase transcription regulator NorR2 (norR2).